We begin with the raw amino-acid sequence, 369 residues long: Protein V (369 aa).

Disordered regions lie at residues 1–23 and 54–320; these read MDQDALISKEDSEVEREASGGRE and INTL…GHRR. Composition is skewed to basic and acidic residues over residues 7-20, 99-110, 150-168, and 175-193; these read ISKEDSEVEREASG, AEAHARNVDKQN, GAEDENREMAANPDKRGED, and EEIRRSAPLPDEREGRADN. 3 positions are modified to phosphoserine; by host: S249, S257, and S260. Residues H318, C337, C341, C353, C355, C358, C362, and C365 each coordinate Zn(2+).

Belongs to the paramyxoviruses V protein family. Interacts with host IFIH1/MDA5 and DHX58/LGP2. Interacts with host IRF3. Interacts with host RIGI regulatory protein (via CARDs domain) and host TRIM25 (via SPRY domain); these interactions prevent TRIM25-mediated ubiquitination of RIG-I and disrupts downstream RIG-I signaling.

Its subcellular location is the host cytoplasm. Functionally, plays an essential role in the inhibition of host immune response. Prevents the establishment of cellular antiviral state by blocking interferon-alpha/beta (IFN-alpha/beta) production and signaling pathway. Interacts with host IFIH1/MDA5 and DHX58/LGP2 to inhibit the transduction pathway involved in the activation of IFN-beta promoter, thus protecting the virus against cell antiviral state. Also interacts with and inhibits host IRF3. Blocks the type I interferon signaling pathway by disrupting the RIG-I signaling pathway. The sequence is that of Protein V (P/V/C) from Cavia cutleri (Guinea pig).